We begin with the raw amino-acid sequence, 438 residues long: GTPase Der (438 aa).

EngA-type G domains lie at P4–Y168 and I177–S352. Residues G10 to S17, D57 to I61, N120 to D123, G183 to S190, D230 to L234, and N295 to D298 each bind GTP. Residues K353–K437 form the KH-like domain.

It belongs to the TRAFAC class TrmE-Era-EngA-EngB-Septin-like GTPase superfamily. EngA (Der) GTPase family. In terms of assembly, associates with the 50S ribosomal subunit.

Its function is as follows. GTPase that plays an essential role in the late steps of ribosome biogenesis. This chain is GTPase Der, found in Clostridium tetani (strain Massachusetts / E88).